Reading from the N-terminus, the 640-residue chain is MPIITLPDGSEKNYESSVTIEKIATDIGPGLAKAALAGRVNGNLLDTCIPITNDAEIQIITSKDNEGLEIIRHSFAHLLGHAVKQLYPEAKMAIGPVIEDGFYYDISYKDTFTPVDLEKIEKRIKELINKDYDVDVEVVSPAKATQVFSERGEVFKLDIIKNIPKDEIIKLYKHEEYIDMCRGPHVPNTRHLRAFKLMKVSGAYWRGDSNNEMLQRIYGTAWKNSKELKEYINRIEEAEKRDHRKLGKKLSLFHFQEEAPGMIFWHPNGWTIYRVLQDFIRETISKYDYQELKSPQIVCRSLWEKSGHWDKFKEDMFTTTSENKEYAIKPMNCPCHVQVFNQGLKSYRDLPIRLSEFGSCHRNEPSGALHGLMRVRNFVQDDGHIFCTNEQIQEEVQSFIDLVFEVYKAFGFNSILIKLSTRPEKRVGSDDVWDKSEKALSDALDSKGLDWSLLPGEGAFYGPKIEFSLKDCLNRVWQCGTIQVDFSMPERLNSSYIDVDGKKQPPVMLHRAILGSFERFIGILIENYSGNLPIWLCPLQIVVMGITDRNNDACLDTKSKLIKYGFRASVDTRNEKVGFKIREHTMQRIPFLIIIGDKEEENNEISVRTREGKDLGKMTLDKFKVIMDESISKKSLVESK.

One can recognise a TGS domain in the interval 1 to 61 (MPIITLPDGS…TNDAEIQIIT (61 aa)). Positions 242 to 533 (DHRKLGKKLS…LIENYSGNLP (292 aa)) are catalytic. 3 residues coordinate Zn(2+): cysteine 333, histidine 384, and histidine 510.

Belongs to the class-II aminoacyl-tRNA synthetase family. In terms of assembly, homodimer. Zn(2+) serves as cofactor.

It is found in the cytoplasm. It carries out the reaction tRNA(Thr) + L-threonine + ATP = L-threonyl-tRNA(Thr) + AMP + diphosphate + H(+). Functionally, catalyzes the attachment of threonine to tRNA(Thr) in a two-step reaction: L-threonine is first activated by ATP to form Thr-AMP and then transferred to the acceptor end of tRNA(Thr). Also edits incorrectly charged L-seryl-tRNA(Thr). This chain is Threonine--tRNA ligase, found in Prochlorococcus marinus (strain NATL1A).